Reading from the N-terminus, the 308-residue chain is Ribosomal RNA small subunit methyltransferase H (308 aa).

S-adenosyl-L-methionine contacts are provided by residues 32–34 (GGH), Asp-52, Phe-78, Asp-100, and Gln-107.

Belongs to the methyltransferase superfamily. RsmH family.

It is found in the cytoplasm. The catalysed reaction is cytidine(1402) in 16S rRNA + S-adenosyl-L-methionine = N(4)-methylcytidine(1402) in 16S rRNA + S-adenosyl-L-homocysteine + H(+). In terms of biological role, specifically methylates the N4 position of cytidine in position 1402 (C1402) of 16S rRNA. The chain is Ribosomal RNA small subunit methyltransferase H from Legionella pneumophila (strain Corby).